Here is a 446-residue protein sequence, read N- to C-terminus: Glutamine synthetase (446 aa).

A GS beta-grasp domain is found at 18–103 (ENVRYLRLQF…LICDVYKTDG (86 aa)). The GS catalytic domain maps to 110–446 (PRANLKRVLK…WERDQYMKQY (337 aa)). The Mg(2+) site is built by glutamate 134 and glutamate 136. Glutamate 186 provides a ligand contact to ATP. Residues glutamate 191 and glutamate 198 each coordinate Mg(2+). Residues 242-243 (NG) and glycine 243 contribute to the L-glutamate site. Position 247 (histidine 247) interacts with Mg(2+). Serine 251 contacts ATP. L-glutamate contacts are provided by arginine 300, glutamate 306, and arginine 318. ATP contacts are provided by arginine 318 and arginine 323. Mg(2+) is bound at residue glutamate 335. Position 337 (arginine 337) interacts with L-glutamate.

It belongs to the glutamine synthetase family. As to quaternary structure, oligomer of 12 subunits arranged in the form of two hexagons. In its feedback-inhibited form, interacts with TnrA in order to block its DNA-binding activity. The cofactor is Mg(2+).

The protein localises to the cytoplasm. The enzyme catalyses L-glutamate + NH4(+) + ATP = L-glutamine + ADP + phosphate + H(+). Its activity is regulated as follows. Inhibited by glutamine. In terms of biological role, glutamine synthetase (GS) is an unusual multitasking protein that functions as an enzyme, a transcription coregulator, and a chaperone in ammonium assimilation and in the regulation of genes involved in nitrogen metabolism. It catalyzes the ATP-dependent biosynthesis of glutamine from glutamate and ammonia. Feedback-inhibited GlnA also interacts with and regulates the activity of the transcriptional regulator TnrA. During nitrogen limitation, TnrA is in its DNA-binding active state and turns on the transcription of genes required for nitrogen assimilation. Under conditions of nitrogen excess, feedback-inhibited GlnA forms a stable complex with TnrA, which inhibits its DNA-binding activity. In contrast, feedback-inhibited GlnA acts as a chaperone to stabilize the DNA-binding activity of GlnR, which represses the transcription of nitrogen assimilation genes. In Staphylococcus aureus (strain N315), this protein is Glutamine synthetase.